The following is a 57-amino-acid chain: Large ribosomal subunit protein bL32 (57 aa).

Residues 1–20 are disordered; that stretch reads MAVQQRRSSKHRRDKRRSHD. The span at 7–18 shows a compositional bias: basic residues; the sequence is RSSKHRRDKRRS.

This sequence belongs to the bacterial ribosomal protein bL32 family.

The protein is Large ribosomal subunit protein bL32 (rpmF) of Mycoplasma genitalium (strain ATCC 33530 / DSM 19775 / NCTC 10195 / G37) (Mycoplasmoides genitalium).